Here is a 242-residue protein sequence, read N- to C-terminus: N-glycosylase/DNA lyase (242 aa).

3 residues coordinate 8-oxoguanine: Q26, S53, and W64. The segment at 120–184 (EGYYKNMKML…EDLRIKSVTS (65 aa)) is helix-hairpin-helix. The Schiff-base intermediate with DNA role is filled by K144. Positions 148 and 174 each coordinate 8-oxoguanine. D176 is an active-site residue. Residues D210 and W214 each coordinate 8-oxoguanine.

This sequence belongs to the archaeal N-glycosylase/DNA lyase (AGOG) family.

The enzyme catalyses 2'-deoxyribonucleotide-(2'-deoxyribose 5'-phosphate)-2'-deoxyribonucleotide-DNA = a 3'-end 2'-deoxyribonucleotide-(2,3-dehydro-2,3-deoxyribose 5'-phosphate)-DNA + a 5'-end 5'-phospho-2'-deoxyribonucleoside-DNA + H(+). Its function is as follows. DNA repair enzyme that is part of the base excision repair (BER) pathway; protects from oxidative damage by removing the major product of DNA oxidation, 8-oxoguanine (GO), from single- and double-stranded DNA substrates. In Pyrococcus furiosus (strain ATCC 43587 / DSM 3638 / JCM 8422 / Vc1), this protein is N-glycosylase/DNA lyase.